Here is a 133-residue protein sequence, read N- to C-terminus: Small ribosomal subunit protein eS8 (133 aa).

The tract at residues methionine 1–aspartate 22 is disordered.

Belongs to the eukaryotic ribosomal protein eS8 family. In terms of assembly, part of the 30S ribosomal subunit.

The protein is Small ribosomal subunit protein eS8 of Saccharolobus islandicus (strain Y.N.15.51 / Yellowstone #2) (Sulfolobus islandicus).